A 124-amino-acid chain; its full sequence is Small ribosomal subunit protein uS12 (124 aa).

Residues 1–30 form a disordered region; the sequence is MPTIQQLVRKGRQDKVAKTKTAALKGSPQR. Asp89 is subject to 3-methylthioaspartic acid. A disordered region spans residues 102-124; it reads ADTQGVKNRKQARSRYGAKKEKS. Residues 108-118 show a composition bias toward basic residues; the sequence is KNRKQARSRYG.

This sequence belongs to the universal ribosomal protein uS12 family. Part of the 30S ribosomal subunit. Contacts proteins S8 and S17. May interact with IF1 in the 30S initiation complex.

Its function is as follows. With S4 and S5 plays an important role in translational accuracy. Interacts with and stabilizes bases of the 16S rRNA that are involved in tRNA selection in the A site and with the mRNA backbone. Located at the interface of the 30S and 50S subunits, it traverses the body of the 30S subunit contacting proteins on the other side and probably holding the rRNA structure together. The combined cluster of proteins S8, S12 and S17 appears to hold together the shoulder and platform of the 30S subunit. The protein is Small ribosomal subunit protein uS12 of Saccharopolyspora erythraea (strain ATCC 11635 / DSM 40517 / JCM 4748 / NBRC 13426 / NCIMB 8594 / NRRL 2338).